The following is a 160-amino-acid chain: UPF0262 protein BSUIS_A0274 (160 aa).

It belongs to the UPF0262 family.

This chain is UPF0262 protein BSUIS_A0274, found in Brucella suis (strain ATCC 23445 / NCTC 10510).